The primary structure comprises 342 residues: D-erythrose-4-phosphate dehydrogenase (342 aa).

An NAD(+)-binding site is contributed by 12–13 (RI). Residues 154–156 (SCT), Arg200, 213–214 (TK), and Arg236 each bind substrate. Catalysis depends on Cys155, which acts as the Nucleophile. Asn318 contacts NAD(+).

The protein belongs to the glyceraldehyde-3-phosphate dehydrogenase family. Epd subfamily. As to quaternary structure, homotetramer.

It is found in the cytoplasm. The enzyme catalyses D-erythrose 4-phosphate + NAD(+) + H2O = 4-phospho-D-erythronate + NADH + 2 H(+). It participates in cofactor biosynthesis; pyridoxine 5'-phosphate biosynthesis; pyridoxine 5'-phosphate from D-erythrose 4-phosphate: step 1/5. In terms of biological role, catalyzes the NAD-dependent conversion of D-erythrose 4-phosphate to 4-phosphoerythronate. This Klebsiella pneumoniae (strain 342) protein is D-erythrose-4-phosphate dehydrogenase.